The primary structure comprises 215 residues: Mite allergen Der p 7 (215 aa).

An N-terminal signal peptide occupies residues 1 to 17; it reads MMKLLLIAAAAFVAVSA. N-linked (GlcNAc...) asparagine glycosylation occurs at asparagine 151.

Belongs to the mite group 7 allergen family.

Its subcellular location is the secreted. The sequence is that of Mite allergen Der p 7 (DERP7) from Dermatophagoides pteronyssinus (European house dust mite).